Here is a 260-residue protein sequence, read N- to C-terminus: Oxidoreductase macE (260 aa).

Belongs to the oxidoreductase OpS7 family.

Its pathway is secondary metabolite biosynthesis; terpenoid biosynthesis. In terms of biological role, oxidoreductase; part of the gene cluster that mediates the biosynthesis of macrophorins, isoprenoid epoxycyclohexenones containing cyclized drimane moieties. The first step of the pathway is the synthesis of 6-methylsalicylic acid (6-MSA) by the polyketide synthase macA. 6-MSA is then converted to m-cresol by the decarboxylase macB. The cytochrome P450 monooxygenase macC then catalyzes the oxidation of m-cresol to toluquinol. Epoxidation of toluquinol is then performed by the short chain dehydrogenase macD, with the help of macE, and a further prenylation by macG leads to 7-deacetoxyyanuthone A. The next step is the hydroxylation of C-22 of 7-deacetoxyyanuthone A by the cytochrome P450 monooxygenase macH to yield 22-deacetylyanuthone A. O-Mevalon transferase macI then attaches mevalon to the hydroxyl group of 22-deacetylyanuthone A to produce yanuthone E. The terpene cyclase macJ catalyzes the cyclization of 22-deacetylyanuthone A to macrophorin A. MacJ is also able to catalyze cyclization of yanuthone E and 7-deacetoxyyanuthone A to their corresponding macrophorins. The macJ products can be further modified by macH and macJ, as well as by the FAD-dependent monooxygenase macF, to produce additional macrophorins, including 4'-oxomacrophorin A, 4'-oxomacrophorin D and 4'-oxomacrophorin E. In Penicillium terrestre, this protein is Oxidoreductase macE.